Reading from the N-terminus, the 860-residue chain is Leucine--tRNA ligase (860 aa).

Positions 42–52 (PYPSGRLHMGH) match the 'HIGH' region motif. The short motif at 619–623 (KMSKS) is the 'KMSKS' region element. K622 contacts ATP.

Belongs to the class-I aminoacyl-tRNA synthetase family.

The protein localises to the cytoplasm. The enzyme catalyses tRNA(Leu) + L-leucine + ATP = L-leucyl-tRNA(Leu) + AMP + diphosphate. This chain is Leucine--tRNA ligase, found in Escherichia coli O157:H7.